We begin with the raw amino-acid sequence, 268 residues long: Indole-3-glycerol phosphate synthase (268 aa).

This sequence belongs to the TrpC family.

It catalyses the reaction 1-(2-carboxyphenylamino)-1-deoxy-D-ribulose 5-phosphate + H(+) = (1S,2R)-1-C-(indol-3-yl)glycerol 3-phosphate + CO2 + H2O. It functions in the pathway amino-acid biosynthesis; L-tryptophan biosynthesis; L-tryptophan from chorismate: step 4/5. This is Indole-3-glycerol phosphate synthase from Magnetococcus marinus (strain ATCC BAA-1437 / JCM 17883 / MC-1).